Consider the following 729-residue polypeptide: Translation initiation factor IF-2 (729 aa).

The tract at residues 20–141 is disordered; the sequence is QFAGGGRGPG…TTTVRAPVRP (122 aa). The segment covering 22–91 has biased composition (gly residues); that stretch reads AGGGRGPGNP…PGGGRGGGRG (70 aa). Residues 92 to 108 are compositionally biased toward basic and acidic residues; it reads GDGRRRDESFVENEGGR. Positions 112–127 are enriched in low complexity; it reads SGRTTSTATTARTPGG. The tr-type G domain occupies 229–396; it reads PRPPVVTIMG…IILLVADLNE (168 aa). Positions 238–245 are G1; the sequence is GHVDHGKT. A GTP-binding site is contributed by 238–245; the sequence is GHVDHGKT. Positions 263–267 are G2; it reads GITQH. Positions 284 to 287 are G3; the sequence is DTPG. GTP-binding positions include 284 to 288 and 338 to 341; these read DTPGH and NKID. Residues 338-341 are G4; it reads NKID. The G5 stretch occupies residues 374 to 376; the sequence is SAK.

It belongs to the TRAFAC class translation factor GTPase superfamily. Classic translation factor GTPase family. IF-2 subfamily.

It localises to the cytoplasm. One of the essential components for the initiation of protein synthesis. Protects formylmethionyl-tRNA from spontaneous hydrolysis and promotes its binding to the 30S ribosomal subunits. Also involved in the hydrolysis of GTP during the formation of the 70S ribosomal complex. This chain is Translation initiation factor IF-2, found in Roseiflexus sp. (strain RS-1).